We begin with the raw amino-acid sequence, 364 residues long: Coproporphyrin III ferrochelatase (364 aa).

The Fe-coproporphyrin III site is built by R29 and Y118. The Fe(2+) site is built by H169 and E250.

It belongs to the ferrochelatase family.

The protein localises to the cytoplasm. It catalyses the reaction Fe-coproporphyrin III + 2 H(+) = coproporphyrin III + Fe(2+). It functions in the pathway porphyrin-containing compound metabolism; protoheme biosynthesis. Functionally, involved in coproporphyrin-dependent heme b biosynthesis. Catalyzes the insertion of ferrous iron into coproporphyrin III to form Fe-coproporphyrin III. The polypeptide is Coproporphyrin III ferrochelatase (Streptococcus pneumoniae serotype 2 (strain D39 / NCTC 7466)).